A 309-amino-acid chain; its full sequence is Ribonuclease Z (309 aa).

Positions 63, 65, 67, 68, 141, 212, and 270 each coordinate Zn(2+). The Proton acceptor role is filled by aspartate 67.

Belongs to the RNase Z family. In terms of assembly, homodimer. The cofactor is Zn(2+).

The enzyme catalyses Endonucleolytic cleavage of RNA, removing extra 3' nucleotides from tRNA precursor, generating 3' termini of tRNAs. A 3'-hydroxy group is left at the tRNA terminus and a 5'-phosphoryl group is left at the trailer molecule.. In terms of biological role, zinc phosphodiesterase, which displays some tRNA 3'-processing endonuclease activity. Probably involved in tRNA maturation, by removing a 3'-trailer from precursor tRNA. The sequence is that of Ribonuclease Z from Halalkalibacterium halodurans (strain ATCC BAA-125 / DSM 18197 / FERM 7344 / JCM 9153 / C-125) (Bacillus halodurans).